The primary structure comprises 225 residues: Thymocyte nuclear protein 1 (225 aa).

Residues 1 to 47 (MSRPRKRLAGTSGSDKGLSGKRTKTENSGEALAKVEDSNPQKTSATK) form a disordered region. The Nuclear localization signal signature appears at 5–10 (RKRLAG). Residues 23–39 (TKTENSGEALAKVEDSN) are compositionally biased toward basic and acidic residues.

Phosphorylated.

Its subcellular location is the nucleus. Functionally, specifically binds 5-hydroxymethylcytosine (5hmC), suggesting that it acts as a specific reader of 5hmC. The polypeptide is Thymocyte nuclear protein 1 (THYN1) (Homo sapiens (Human)).